The primary structure comprises 709 residues: Potassium-transporting ATPase ATP-binding subunit (709 aa).

The next 4 helical transmembrane spans lie at 55–75 (VMLVVLVGAVITTLAFLRDLA), 86–106 (GLVAAFLWFTVLFANFAEAMA), 236–256 (IALNILLAGLTIIFLLAVVTL), and 269–289 (VVVLVALLVCLIPTTIGALLS). The 4-aspartylphosphate intermediate role is filled by aspartate 324. ATP-binding positions include aspartate 361, glutamate 365, 395 to 402 (FTAETRMS), and lysine 417. Positions 545 and 549 each coordinate Mg(2+). Helical transmembrane passes span 615–635 (FAIIPAMFVGLYPVLDKLNVM), 643–663 (AILSAVIFNALVIVALIPLAL), and 688–708 (GLVVPFIGIKLVDLVIVALGV).

The protein belongs to the cation transport ATPase (P-type) (TC 3.A.3) family. Type IA subfamily. The system is composed of three essential subunits: KdpA, KdpB and KdpC.

It is found in the cell membrane. The catalysed reaction is K(+)(out) + ATP + H2O = K(+)(in) + ADP + phosphate + H(+). Functionally, part of the high-affinity ATP-driven potassium transport (or Kdp) system, which catalyzes the hydrolysis of ATP coupled with the electrogenic transport of potassium into the cytoplasm. This subunit is responsible for energy coupling to the transport system and for the release of the potassium ions to the cytoplasm. The sequence is that of Potassium-transporting ATPase ATP-binding subunit from Mycobacterium tuberculosis (strain ATCC 25618 / H37Rv).